The primary structure comprises 39 residues: Photosystem II reaction center protein Psb30 (39 aa).

A helical transmembrane segment spans residues 12-32 (IFQLTFVGLIVIAGPIVIAVL).

It belongs to the Psb30/Ycf12 family. As to quaternary structure, PSII is composed of 1 copy each of membrane proteins PsbA, PsbB, PsbC, PsbD, PsbE, PsbF, PsbH, PsbI, PsbJ, PsbK, PsbL, PsbM, PsbT, PsbX, PsbY, PsbZ, Psb30/Ycf12, peripheral proteins PsbO, CyanoQ (PsbQ), PsbU, PsbV and a large number of cofactors. It forms dimeric complexes.

It is found in the cellular thylakoid membrane. Functionally, a core subunit of photosystem II (PSII), probably helps stabilize the reaction center. The protein is Photosystem II reaction center protein Psb30 of Crocosphaera subtropica (strain ATCC 51142 / BH68) (Cyanothece sp. (strain ATCC 51142)).